Consider the following 433-residue polypeptide: Serine hydroxymethyltransferase (433 aa).

A (6S)-5,6,7,8-tetrahydrofolate-binding site is contributed by 121-123 (AHV). K227 carries the post-translational modification N6-(pyridoxal phosphate)lysine. (6S)-5,6,7,8-tetrahydrofolate is bound at residue E243.

The protein belongs to the SHMT family. Homodimer. Pyridoxal 5'-phosphate serves as cofactor.

Its subcellular location is the cytoplasm. It functions in the pathway amino-acid biosynthesis; glycine biosynthesis; glycine from L-serine: step 1/1. Functionally, catalyzes the reversible interconversion of serine and glycine with a modified folate serving as the one-carbon carrier. Also exhibits a pteridine-independent aldolase activity toward beta-hydroxyamino acids, producing glycine and aldehydes, via a retro-aldol mechanism. This Saccharolobus islandicus (strain L.S.2.15 / Lassen #1) (Sulfolobus islandicus) protein is Serine hydroxymethyltransferase.